A 102-amino-acid polypeptide reads, in one-letter code: NADH-quinone oxidoreductase subunit K (102 aa).

3 helical membrane passes run leucine 5 to leucine 25, isoleucine 31 to phenylalanine 51, and valine 62 to leucine 82.

The protein belongs to the complex I subunit 4L family. As to quaternary structure, NDH-1 is composed of 14 different subunits. Subunits NuoA, H, J, K, L, M, N constitute the membrane sector of the complex.

It is found in the cell inner membrane. The enzyme catalyses a quinone + NADH + 5 H(+)(in) = a quinol + NAD(+) + 4 H(+)(out). In terms of biological role, NDH-1 shuttles electrons from NADH, via FMN and iron-sulfur (Fe-S) centers, to quinones in the respiratory chain. The immediate electron acceptor for the enzyme in this species is believed to be ubiquinone. Couples the redox reaction to proton translocation (for every two electrons transferred, four hydrogen ions are translocated across the cytoplasmic membrane), and thus conserves the redox energy in a proton gradient. This chain is NADH-quinone oxidoreductase subunit K, found in Bordetella parapertussis (strain 12822 / ATCC BAA-587 / NCTC 13253).